The primary structure comprises 272 residues: Ribonuclease HII (272 aa).

Positions 87–272 (KYVAGVDEVG…HRMSFLKNIL (186 aa)) constitute an RNase H type-2 domain. A divalent metal cation contacts are provided by aspartate 93, glutamate 94, and aspartate 188.

It belongs to the RNase HII family. It depends on Mn(2+) as a cofactor. The cofactor is Mg(2+).

The protein localises to the cytoplasm. It catalyses the reaction Endonucleolytic cleavage to 5'-phosphomonoester.. Its function is as follows. Endonuclease that specifically degrades the RNA of RNA-DNA hybrids. The protein is Ribonuclease HII of Clostridium perfringens (strain 13 / Type A).